The chain runs to 193 residues: MGRARDAILDALENLSGDELKKFKMKLLTVQLREGYGRIPRGALLQMDAIDLTDKLVSYYLESYGLELTMTVLRDMGLQELAEQLQTTKEESGAVAAAASVPAQSTARTGHFVDQHRQALIARVTEVDGVLDALHGSVLTEGQYQAVRAETTSQDKMRKLFSFVPSWNLTCKDSLLQALKEIHPYLVMDLEQS.

Residues 1-91 (MGRARDAILD…AEQLQTTKEE (91 aa)) form the Pyrin domain. Glycyl lysine isopeptide (Lys-Gly) (interchain with G-Cter in ubiquitin) cross-links involve residues Lys55 and Lys172. Residues 105-193 (STARTGHFVD…PYLVMDLEQS (89 aa)) enclose the CARD domain. Position 193 is a phosphoserine (Ser193).

As to quaternary structure, self-associates; enforced oligomerization induces apoptosis, NF-kappa-B regulation and interleukin-1 beta secretion. Homooligomers can form disk-like particles of approximately 12 nm diameter and approximately 1 nm height. Component of several inflammasomes containing one pattern recognition receptor/sensor, such as NLRP2, NLRP3, NLRP6, NLRC4, AIM2, MEFV or NOD2, and probably NLRC4 or NLRP12. Major component of the ASC pyroptosome, a 1-2 um supramolecular assembly (one per macrophage cell) which consists of oligomerized PYCARD dimers and CASP1. Interacts with CASP1 (precursor form); the interaction induces activation of CASP1 leading to the processing of interleukin-1 beta; PYCARD competes with RIPK2 for binding to CASP1. Interacts with NLRP3; the interaction requires the homooligomerization of NLRP3. Interacts with NLRP2, NLRC4, MEFV, CARD16, AIM2, NOD2, RIGI, RIPK2, PYDC1, PYDC2, NLRP10, CHUK, IKBKB and BAX. Interacts with CASP8. Component of the AIM2 PANoptosome complex, a multiprotein complex that drives inflammatory cell death (PANoptosis). Post-translationally, phosphorylated. 'Lys-63'-linked polyubiquitination by TRAF3 is critical for speck formation and inflammasome activation. 'Lys-63'-linked deubiquitinated by USP50; a crucial step for NLRP3-mediated inflammasome activation. 'Lys-63'-linked polyubiquitination by PELI1 is also critical for speck formation and inflammasome activation. Deubiquitinated by USP3 that cleaves 'Lys-48'-linked ubiquitin chains and strengthens its stability by blocking proteasomal degradation. In terms of tissue distribution, expressed in small intestine, colon, thymus, spleen, brain, heart, skeletal muscle, kidney, lung and liver.

Its subcellular location is the cytoplasm. It localises to the inflammasome. The protein localises to the endoplasmic reticulum. It is found in the mitochondrion. The protein resides in the nucleus. Functionally, functions as a key mediator in apoptosis and inflammation. Promotes caspase-mediated apoptosis involving predominantly caspase-8 and also caspase-9 in a probable cell type-specific manner. Involved in activation of the mitochondrial apoptotic pathway, promotes caspase-8-dependent proteolytic maturation of BID independently of FADD in certain cell types and also mediates mitochondrial translocation of BAX and activates BAX-dependent apoptosis coupled to activation of caspase-9, -2 and -3. Involved in innate immune response by acting as an integral adapter in the assembly of various inflammasomes (NLRP2, NLRP3, NLRP6 and AIM2) which recruit and activate caspase-1 leading to processing and secretion of pro-inflammatory cytokines. Caspase-1-dependent inflammation leads to macrophage pyroptosis, a form of cell death. The function as activating adapter in different types of inflammasomes is mediated by the pyrin and CARD domains and their homotypic interactions. Clustered PYCARD nucleates the formation of caspase-1 filaments through the interaction of their respective CARD domains, acting as a platform for of caspase-1 polymerization. In the NLRC4 inflammasomes seems not be required but facilitates the processing of procaspase-1. In cooperation with NOD2 involved in an inflammasome activated by bacterial muramyl dipeptide leading to caspase-1 activation. May be involved in RIGI-triggered pro-inflammatory responses and inflammasome activation. In collaboration with AIM2 which detects cytosolic double-stranded DNA may also be involved in a caspase-1-independent cell death that involves caspase-8. In adaptive immunity may be involved in maturation of dendritic cells to stimulate T-cell immunity and in cytoskeletal rearrangements coupled to chemotaxis and antigen uptake may be involved in post-transcriptional regulation of the guanine nucleotide exchange factor DOCK2; the latter function is proposed to involve the nuclear form. Also involved in transcriptional activation of cytokines and chemokines independent of the inflammasome; this function may involve AP-1, NF-kappa-B, MAPK and caspase-8 signaling pathways. For regulation of NF-kappa-B activating and inhibiting functions have been reported. Modulates NF-kappa-B induction at the level of the IKK complex by inhibiting kinase activity of CHUK and IKBK. Proposed to compete with RIPK2 for association with CASP1 thereby down-regulating CASP1-mediated RIPK2-dependent NF-kappa-B activation and activating interleukin-1 beta processing. Modulates host resistance to DNA virus infection, probably by inducing the cleavage of and inactivating CGAS in presence of cytoplasmic double-stranded DNA. This Mus musculus (Mouse) protein is Apoptosis-associated speck-like protein containing a CARD (Pycard).